The chain runs to 423 residues: Ferrochelatase, mitochondrial (423 aa).

A mitochondrion-targeting transit peptide spans 1–54 (MRSLGANMAAALRAAGVLLRDPLASSSWRVCQPWRWKSGAAAAAVTTETAQHAQ). The residue at position 57 (lysine 57) is an N6-acetyllysine. Residues arginine 115, tyrosine 123, and serine 130 each coordinate protoporphyrin IX. Lysine 138 carries the post-translational modification N6-succinyllysine. Cysteine 196 provides a ligand contact to [2Fe-2S] cluster. Active-site residues include histidine 230 and aspartate 383. [2Fe-2S] cluster-binding residues include cysteine 403, cysteine 406, and cysteine 411. The residue at position 415 (lysine 415) is an N6-acetyllysine; alternate. An N6-succinyllysine; alternate modification is found at lysine 415.

The protein belongs to the ferrochelatase family. In terms of assembly, homodimer. Homotetramer. Interacts with PGRMC1; the interaction results in decreased FECH activity. Interacts with ABCB10 and SLC25A37; this interaction forms an oligomeric complex. Forms a complex with ABCB7 and ABCB10, where a dimeric FECH bridges ABCB7 and ABCB10 homodimers; this complex may be required for cellular iron homeostasis, mitochondrial function and heme biosynthesis. Interacts with ABCB7 and ABCB10. The cofactor is [2Fe-2S] cluster.

It is found in the mitochondrion inner membrane. It catalyses the reaction heme b + 2 H(+) = protoporphyrin IX + Fe(2+). It functions in the pathway porphyrin-containing compound metabolism; protoheme biosynthesis; protoheme from protoporphyrin-IX: step 1/1. With respect to regulation, inhibited by nitric oxide (NO). The 2Fe-2S cluster could act as a NO sensor. Its function is as follows. Catalyzes the ferrous insertion into protoporphyrin IX and participates in the terminal step in the heme biosynthetic pathway. The chain is Ferrochelatase, mitochondrial from Homo sapiens (Human).